Reading from the N-terminus, the 379-residue chain is Protein psi1 (379 aa).

Residues M1–T70 form the J domain. Disordered stretches follow at residues I69–A95 and F176–E205. Residues A81–A95 are compositionally biased toward gly residues.

Required for nuclear migration during mitosis. It is required for the normal initiation of translation. The chain is Protein psi1 (psi1) from Schizosaccharomyces pombe (strain 972 / ATCC 24843) (Fission yeast).